The chain runs to 170 residues: Flavodoxin (170 aa).

Residues 4 to 165 enclose the Flavodoxin-like domain; the sequence is IGLFFGTQTG…RIQAWVAQLK (162 aa).

Belongs to the flavodoxin family. FMN is required as a cofactor.

Low-potential electron donor to a number of redox enzymes. This is Flavodoxin (isiB) from Picosynechococcus sp. (strain ATCC 27264 / PCC 7002 / PR-6) (Agmenellum quadruplicatum).